Consider the following 1297-residue polypeptide: Phosphoribosylformylglycinamidine synthase (1297 aa).

The disordered stretch occupies residues 304–323; that stretch reads PFPGAATGSGGEIRDEGATG. ATP contacts are provided by residues 307–318 and alanine 678; that span reads GAATGSGGEIRD. Mg(2+) is bound by residues aspartate 679, glutamate 718, asparagine 722, and aspartate 886. Residue serine 888 coordinates ATP. One can recognise a Glutamine amidotransferase type-1 domain in the interval 1043–1297; the sequence is RIAILREQGV…LFQNARVALG (255 aa). Cysteine 1137 functions as the Nucleophile in the catalytic mechanism. Residues histidine 1262 and glutamate 1264 contribute to the active site.

The protein in the N-terminal section; belongs to the FGAMS family. As to quaternary structure, monomer.

The protein localises to the cytoplasm. The enzyme catalyses N(2)-formyl-N(1)-(5-phospho-beta-D-ribosyl)glycinamide + L-glutamine + ATP + H2O = 2-formamido-N(1)-(5-O-phospho-beta-D-ribosyl)acetamidine + L-glutamate + ADP + phosphate + H(+). It functions in the pathway purine metabolism; IMP biosynthesis via de novo pathway; 5-amino-1-(5-phospho-D-ribosyl)imidazole from N(2)-formyl-N(1)-(5-phospho-D-ribosyl)glycinamide: step 1/2. In terms of biological role, phosphoribosylformylglycinamidine synthase involved in the purines biosynthetic pathway. Catalyzes the ATP-dependent conversion of formylglycinamide ribonucleotide (FGAR) and glutamine to yield formylglycinamidine ribonucleotide (FGAM) and glutamate. The protein is Phosphoribosylformylglycinamidine synthase of Histophilus somni (strain 129Pt) (Haemophilus somnus).